A 236-amino-acid chain; its full sequence is Phycobilisome rod-core linker polypeptide cpcG (236 aa).

Residues 11 to 193 enclose the PBS-linker domain; the sequence is STQNQRVNGF…LDYNFLYKKN (183 aa).

It belongs to the phycobilisome linker protein family. The phycobilisome is a hemidiscoidal structure that is composed of two distinct substructures: a core complex and a number of rods radiating from the core.

Its subcellular location is the plastid. It localises to the chloroplast. The protein localises to the chloroplast thylakoid membrane. Rod-core linker protein required for attachment of phycocyanin to allophycocyanin in cores of phycobilisomes. Functionally, linker polypeptides determine the state of aggregation and the location of the disk-shaped phycobiliprotein units within the phycobilisome and modulate their spectroscopic properties in order to mediate a directed and optimal energy transfer. In Aglaothamnion neglectum (Red alga), this protein is Phycobilisome rod-core linker polypeptide cpcG (cpcG).